Here is a 290-residue protein sequence, read N- to C-terminus: Phosphatidylserine decarboxylase proenzyme (290 aa).

Active-site charge relay system; for autoendoproteolytic cleavage activity residues include Asp-96, His-153, and Ser-257. Ser-257 acts as the Schiff-base intermediate with substrate; via pyruvic acid; for decarboxylase activity in catalysis. Ser-257 is modified (pyruvic acid (Ser); by autocatalysis).

Belongs to the phosphatidylserine decarboxylase family. PSD-B subfamily. Prokaryotic type I sub-subfamily. In terms of assembly, heterodimer of a large membrane-associated beta subunit and a small pyruvoyl-containing alpha subunit. It depends on pyruvate as a cofactor. In terms of processing, is synthesized initially as an inactive proenzyme. Formation of the active enzyme involves a self-maturation process in which the active site pyruvoyl group is generated from an internal serine residue via an autocatalytic post-translational modification. Two non-identical subunits are generated from the proenzyme in this reaction, and the pyruvate is formed at the N-terminus of the alpha chain, which is derived from the carboxyl end of the proenzyme. The autoendoproteolytic cleavage occurs by a canonical serine protease mechanism, in which the side chain hydroxyl group of the serine supplies its oxygen atom to form the C-terminus of the beta chain, while the remainder of the serine residue undergoes an oxidative deamination to produce ammonia and the pyruvoyl prosthetic group on the alpha chain. During this reaction, the Ser that is part of the protease active site of the proenzyme becomes the pyruvoyl prosthetic group, which constitutes an essential element of the active site of the mature decarboxylase.

Its subcellular location is the cell membrane. It carries out the reaction a 1,2-diacyl-sn-glycero-3-phospho-L-serine + H(+) = a 1,2-diacyl-sn-glycero-3-phosphoethanolamine + CO2. It functions in the pathway phospholipid metabolism; phosphatidylethanolamine biosynthesis; phosphatidylethanolamine from CDP-diacylglycerol: step 2/2. In terms of biological role, catalyzes the formation of phosphatidylethanolamine (PtdEtn) from phosphatidylserine (PtdSer). The sequence is that of Phosphatidylserine decarboxylase proenzyme from Haemophilus influenzae (strain 86-028NP).